Here is a 593-residue protein sequence, read N- to C-terminus: UvrABC system protein C (593 aa).

The 78-residue stretch at 14-91 (DSPGCYLHKD…IQENMPKYNI (78 aa)) folds into the GIY-YIG domain. The 36-residue stretch at 196–231 (NKIVNGLTEKMKSAAMTMEFERAAEYRDLIEAISLL) folds into the UVR domain.

It belongs to the UvrC family. In terms of assembly, interacts with UvrB in an incision complex.

It is found in the cytoplasm. The UvrABC repair system catalyzes the recognition and processing of DNA lesions. UvrC both incises the 5' and 3' sides of the lesion. The N-terminal half is responsible for the 3' incision and the C-terminal half is responsible for the 5' incision. The sequence is that of UvrABC system protein C from Streptococcus agalactiae serotype V (strain ATCC BAA-611 / 2603 V/R).